The chain runs to 137 residues: Partner of bursicon (137 aa).

Residues 1 to 24 (MNIMITKIFFLVQLFYIVVSKSSA) form the signal peptide. 5 disulfides stabilise this stretch: Cys-28/Cys-86, Cys-52/Cys-101, Cys-61/Cys-127, Cys-65/Cys-129, and Cys-83/Cys-132. In terms of domain architecture, CTCK spans 28-123 (CETVASEVHV…NALMEVRLRE (96 aa)).

In terms of assembly, heterodimer of burs and pburs.

It is found in the secreted. In terms of biological role, final heterodimeric neurohormone released at the end of the molting cycle, involved in the sclerotization (tanning) of the insect cuticle, melanization and wing spreading. The polypeptide is Partner of bursicon (Bombyx mori (Silk moth)).